The chain runs to 819 residues: Protein EFR3 homolog A (819 aa).

The segment at 210–230 is disordered; that stretch reads DTDSRTGPPASPTTGDKEENP.

The protein belongs to the EFR3 family. As to quaternary structure, component of a phosphatidylinositol 4-kinase (PI4K) complex. Palmitoylated at its N-terminus, anchoring the protein to the plasma membrane.

The protein resides in the cell membrane. In terms of biological role, component of a complex required to localize phosphatidylinositol 4-kinase (PI4K) to the plasma membrane. The complex acts as a regulator of phosphatidylinositol 4-phosphate (PtdIns(4)P) synthesis. In the complex, efr3a probably acts as the membrane-anchoring component. This chain is Protein EFR3 homolog A (efr3a), found in Xenopus laevis (African clawed frog).